A 257-amino-acid chain; its full sequence is Molybdate-binding protein ModA (257 aa).

An N-terminal signal peptide occupies residues 1–24 (MARKWLNLFAGAALSFAVAGNALA). Molybdate is bound by residues serine 36, serine 63, alanine 149, valine 176, and tyrosine 194.

Belongs to the bacterial solute-binding protein ModA family. In terms of assembly, the complex is composed of two ATP-binding proteins (ModC), two transmembrane proteins (ModB) and a solute-binding protein (ModA).

The protein resides in the periplasm. Functionally, part of the ABC transporter complex ModABC involved in the transport of molybdenum into the cell. Binds molybdate with high affinity in vitro and with a similar affinity in vivo. Binds tungstate with high affinity in vitro. Binds unnatural anion perrhenate with high affinity in vitro. Does not bind sulfate, phosphate, arsenate, selenate, chlorate, metavanadate, nitrate, perchlorate, permanganate or carbonate. This is Molybdate-binding protein ModA (modA) from Escherichia coli (strain K12).